The primary structure comprises 116 residues: DNA-binding protein Tpen_0471 (116 aa).

This sequence belongs to the PDCD5 family.

This Thermofilum pendens (strain DSM 2475 / Hrk 5) protein is DNA-binding protein Tpen_0471.